A 245-amino-acid polypeptide reads, in one-letter code: tRNA pseudouridine synthase A (245 aa).

The Nucleophile role is filled by aspartate 52. Position 111 (tyrosine 111) interacts with substrate.

This sequence belongs to the tRNA pseudouridine synthase TruA family. As to quaternary structure, homodimer.

It catalyses the reaction uridine(38/39/40) in tRNA = pseudouridine(38/39/40) in tRNA. Functionally, formation of pseudouridine at positions 38, 39 and 40 in the anticodon stem and loop of transfer RNAs. The polypeptide is tRNA pseudouridine synthase A (Zymomonas mobilis subsp. mobilis (strain ATCC 31821 / ZM4 / CP4)).